The chain runs to 410 residues: MLPLIKQEDIKPEPDFTIQYRNKIIDTAGCIVISDSEEEQGEEVETRGATASSPSTGSGTPRVTSPTHPLSQMNHPPLPDPLGRPDEDSSSSSSSCSSASDSESESEEMKCSSGGGASVTSSHHGRGGFGGAASSSLLSCGHQSSGGASTGPRKKKSKRISELDNEKVRNIMKDKNTPFCTPNVQTRRGRVKIDEVSRMFRNTNRSLEYKNLPFTIPSMHQVLDEAIKACKTMQVNNKGIQIIYTRNHEVKSEVDAVRCRLGTMCNLALSTPFLMEHTMPVTHPPKVAQRTADACNEGVKAAWSLKELHTHQLCPRSSDYRNMIIHAATPVDLLGALNLCLPLMQKFPKQVMVRIFSTNQGGFMLPIYETATKAYAVGQFEQPTETPPEDLDTLSLAIEAAIQDLRNKSQ.

Positions 36–166 are disordered; the sequence is SEEEQGEEVE…SKRISELDNE (131 aa). 3 stretches are compositionally biased toward low complexity: residues 47 to 67, 90 to 101, and 132 to 147; these read RGATASSPSTGSGTPRVTSPT, SSSSSSCSSASD, and AASSSLLSCGHQSSGG. A zinc finger spans residues 257 to 283; the sequence is VRCRLGTMCNLALSTPFLMEHTMPVTH.

Functionally, activates the E1.7 promoter. This activation is augmented by the IE1 protein. It down-regulates the transcription of genes under the control of the major IE promoter. This Homo sapiens (Human) protein is 45 kDa immediate-early protein 2 (UL122).